The following is a 507-amino-acid chain: MEELQRYFEIDRFRQQCFIYPFLFQEYIYALAHYYALNGSIFYETMENFGYDNKSSSLIVKRLITRMHRQNRLIISINDSNQNRFIGHGKNLYTQTVSEGFAVIMEIPFSLQLVFSFEEKEITKSHNLRSIHSIFPFFEDKLSHLNHVSHILIPYPAHLEILVQILRSCIQDAPSLHLLRFFLHDYQNSNSLKARKKSIFVCSKENRRFFLFLYNIHVYECESVFVFLRKQSFHLRSTSFRTVLERTHFYGKIEHLVVVLRNDFQKTLWMFKDPFMHYVRYQGNSLLASKGTHLRMKKWKSYLVHFWQSHFYLWSQPNRIHINQLYNHSFYFMSYLLSVRQNSSAVRSQMLENSFLIDTSIKKFETLVPTIPLIGLLAKAKFCNVFGHPISKPARADSSDSDIISRFGRIYRNLSHYYSGSSKKQTLYRIKYILRLSCARTLARKHKSTARAFLKELGSPFLEEFLMEEEQVLSLIFPRTPSPSYRSHRERIWFLDIICINILTNHV.

The protein belongs to the intron maturase 2 family. MatK subfamily.

Its subcellular location is the plastid. The protein resides in the chloroplast. Its function is as follows. Usually encoded in the trnK tRNA gene intron. Probably assists in splicing its own and other chloroplast group II introns. The protein is Maturase K of Annona muricata (Soursop).